A 150-amino-acid chain; its full sequence is 3-dehydroquinate dehydratase (150 aa).

Y26 (proton acceptor) is an active-site residue. Residues N75, H81, and D88 each coordinate substrate. The active-site Proton donor is H101. Residues 102–103 (LS) and R112 contribute to the substrate site.

Belongs to the type-II 3-dehydroquinase family. As to quaternary structure, homododecamer.

The catalysed reaction is 3-dehydroquinate = 3-dehydroshikimate + H2O. It participates in metabolic intermediate biosynthesis; chorismate biosynthesis; chorismate from D-erythrose 4-phosphate and phosphoenolpyruvate: step 3/7. Catalyzes a trans-dehydration via an enolate intermediate. The chain is 3-dehydroquinate dehydratase from Shewanella loihica (strain ATCC BAA-1088 / PV-4).